Here is a 108-residue protein sequence, read N- to C-terminus: UPF0060 membrane protein Rsph17029_0436 (108 aa).

4 helical membrane passes run leucine 5 to tryptophan 25, alanine 32 to threonine 52, alanine 62 to valine 82, and arginine 86 to proline 106.

This sequence belongs to the UPF0060 family.

Its subcellular location is the cell inner membrane. The sequence is that of UPF0060 membrane protein Rsph17029_0436 from Cereibacter sphaeroides (strain ATCC 17029 / ATH 2.4.9) (Rhodobacter sphaeroides).